The chain runs to 61 residues: MAKKSLIAKAKRTPKFGVRTYNRCPICGRPRAYLRKFGICRICFRSMALKGELPGVVKSSW.

Zn(2+)-binding residues include Cys-24, Cys-27, Cys-40, and Cys-43.

Belongs to the universal ribosomal protein uS14 family. Zinc-binding uS14 subfamily. In terms of assembly, part of the 30S ribosomal subunit. Contacts proteins S3 and S10. It depends on Zn(2+) as a cofactor.

In terms of biological role, binds 16S rRNA, required for the assembly of 30S particles and may also be responsible for determining the conformation of the 16S rRNA at the A site. The polypeptide is Small ribosomal subunit protein uS14 (Syntrophobacter fumaroxidans (strain DSM 10017 / MPOB)).